The sequence spans 200 residues: AP-5 complex subunit sigma-1 (200 aa).

In terms of assembly, probably part of the adaptor protein complex 5 (AP-5) a tetramer composed of AP5B1, AP5M1, AP5S1 and AP5Z1. Interacts with ZFYVE26 and SPG11.

The protein localises to the cytoplasm. It localises to the cytosol. Its subcellular location is the late endosome membrane. The protein resides in the lysosome membrane. Functionally, as part of AP-5, a probable fifth adaptor protein complex it may be involved in endosomal transport. According to PubMed:20613862, it is required for efficient homologous recombination DNA double-strand break repair. The protein is AP-5 complex subunit sigma-1 (AP5S1) of Homo sapiens (Human).